Here is a 383-residue protein sequence, read N- to C-terminus: Chaperone protein DnaJ (383 aa).

Residues 5–70 (DYYEVLGVAK…EKRAAYDRFG (66 aa)) enclose the J domain. The CR-type zinc-finger motif lies at 139 to 217 (GKTETIRIPT…CSGAGRVNRE (79 aa)). 8 residues coordinate Zn(2+): C152, C155, C169, C172, C191, C194, C205, and C208. CXXCXGXG motif repeat units lie at residues 152–159 (CEACSGTG), 169–176 (CSTCGGYG), 191–198 (CPNCHGRG), and 205–212 (CTACSGAG).

Belongs to the DnaJ family. In terms of assembly, homodimer. The cofactor is Zn(2+).

It localises to the cytoplasm. Its function is as follows. Participates actively in the response to hyperosmotic and heat shock by preventing the aggregation of stress-denatured proteins and by disaggregating proteins, also in an autonomous, DnaK-independent fashion. Unfolded proteins bind initially to DnaJ; upon interaction with the DnaJ-bound protein, DnaK hydrolyzes its bound ATP, resulting in the formation of a stable complex. GrpE releases ADP from DnaK; ATP binding to DnaK triggers the release of the substrate protein, thus completing the reaction cycle. Several rounds of ATP-dependent interactions between DnaJ, DnaK and GrpE are required for fully efficient folding. Also involved, together with DnaK and GrpE, in the DNA replication of plasmids through activation of initiation proteins. The sequence is that of Chaperone protein DnaJ from Methylorubrum populi (strain ATCC BAA-705 / NCIMB 13946 / BJ001) (Methylobacterium populi).